The primary structure comprises 619 residues: Coagulation factor X-activating enzyme heavy chain (619 aa).

Residues 1 to 20 form the signal peptide; sequence MMQVLLVTISLAVFPYQGSS. A propeptide spanning residues 21-188 is cleaved from the precursor; that stretch reads IILESGNVND…SDKPIKKASQ (168 aa). The Peptidase M12B domain maps to 199 to 393; that stretch reads IFIELVIIVD…YKPKCIFNPP (195 aa). Cys215 and Cys251 are oxidised to a cystine. Asn216 and Asn257 each carry an N-linked (GlcNAc...) (complex) asparagine glycan. Intrachain disulfides connect Cys308–Cys388, Cys348–Cys372, and Cys350–Cys355. Residue His333 coordinates Zn(2+). Glu334 is a catalytic residue. 2 residues coordinate Zn(2+): His337 and His343. Asn351 and Asn371 each carry an N-linked (GlcNAc...) (complex) asparagine glycan. Positions 401-487 constitute a Disintegrin domain; it reads PPVCGNEIWE…ECPRDQLQQN (87 aa). Residues Val403, Asn406, Ile408, Glu410, Glu413, and Asp416 each coordinate Ca(2+). 14 disulfide bridges follow: Cys404–Cys433, Cys415–Cys428, Cys417–Cys423, Cys427–Cys450, Cys441–Cys447, Cys446–Cys472, Cys459–Cys479, Cys466–Cys498, Cys491–Cys503, Cys510–Cys560, Cys525–Cys571, Cys538–Cys548, Cys555–Cys597, and Cys591–Cys603. The D/ECD-tripeptide motif lies at 465-467; that stretch reads ECD. Residues Asp467, Val468, Glu470, Asp482, and Gln483 each coordinate Ca(2+).

The protein belongs to the venom metalloproteinase (M12B) family. P-III subfamily. P-IIId sub-subfamily. As to quaternary structure, heterotrimer; disulfide-linked. The heterotrimer consists of 1 heavy chain and 2 light chains (lectins): LC1 and LC2. Requires Zn(2+) as cofactor. Post-translationally, N-glycosylated; probably required for conformation. Removal of easily accessible sugars does not change its functional capacity, but removal of the core sugars with N-glycanase causes a virtually complete loss of enzyme activity, apparently as a result of major conformational changes in the molecule. Not O-glycosylated. In terms of tissue distribution, expressed by the venom gland.

It localises to the secreted. The enzyme catalyses Specifically activates several components of the blood clotting system, including coagulation factor X, coagulation factor IX and protein C by cleavage of Arg-|-Xaa bonds. Has no action on insulin B chain.. Its function is as follows. Catalytic subunit of blood coagulation factor X-activating enzyme. Activates coagulation factor X (F10) by cleaving the Arg-Ile bond and is also able to activate coagulation factor IX (F9) and protein S (PROS1) by specific cleavage of Arg-Ile and Arg-Val bonds. The protein is Coagulation factor X-activating enzyme heavy chain of Daboia siamensis (Eastern Russel's viper).